A 216-amino-acid polypeptide reads, in one-letter code: Probable GTP-binding protein EngB (216 aa).

The 175-residue stretch at 27 to 201 (GGVEIAFAGR…AQTLTGWYLA (175 aa)) folds into the EngB-type G domain. Residues 35 to 42 (GRSNAGKS), 62 to 66 (GRTQL), 80 to 83 (DLPG), 147 to 150 (TKAD), and 180 to 182 (FSS) contribute to the GTP site. Mg(2+) is bound by residues Ser42 and Thr64.

Belongs to the TRAFAC class TrmE-Era-EngA-EngB-Septin-like GTPase superfamily. EngB GTPase family. Mg(2+) serves as cofactor.

Necessary for normal cell division and for the maintenance of normal septation. This Aeromonas hydrophila subsp. hydrophila (strain ATCC 7966 / DSM 30187 / BCRC 13018 / CCUG 14551 / JCM 1027 / KCTC 2358 / NCIMB 9240 / NCTC 8049) protein is Probable GTP-binding protein EngB.